The following is a 440-amino-acid chain: Serine hydroxymethyltransferase (440 aa).

(6S)-5,6,7,8-tetrahydrofolate contacts are provided by residues Leu-119 and 123 to 125; that span reads GHL. Lys-228 is subject to N6-(pyridoxal phosphate)lysine. 370–372 serves as a coordination point for (6S)-5,6,7,8-tetrahydrofolate; sequence SPF.

Belongs to the SHMT family. Homodimer. It depends on pyridoxal 5'-phosphate as a cofactor.

It localises to the cytoplasm. It catalyses the reaction (6R)-5,10-methylene-5,6,7,8-tetrahydrofolate + glycine + H2O = (6S)-5,6,7,8-tetrahydrofolate + L-serine. The protein operates within one-carbon metabolism; tetrahydrofolate interconversion. It functions in the pathway amino-acid biosynthesis; glycine biosynthesis; glycine from L-serine: step 1/1. Functionally, catalyzes the reversible interconversion of serine and glycine with tetrahydrofolate (THF) serving as the one-carbon carrier. This reaction serves as the major source of one-carbon groups required for the biosynthesis of purines, thymidylate, methionine, and other important biomolecules. Also exhibits THF-independent aldolase activity toward beta-hydroxyamino acids, producing glycine and aldehydes, via a retro-aldol mechanism. The chain is Serine hydroxymethyltransferase from Chloroherpeton thalassium (strain ATCC 35110 / GB-78).